The sequence spans 256 residues: 5'-nucleotidase SurE (256 aa).

Aspartate 8, aspartate 9, serine 40, and asparagine 92 together coordinate a divalent metal cation.

This sequence belongs to the SurE nucleotidase family. The cofactor is a divalent metal cation.

It localises to the cytoplasm. The enzyme catalyses a ribonucleoside 5'-phosphate + H2O = a ribonucleoside + phosphate. Its function is as follows. Nucleotidase that shows phosphatase activity on nucleoside 5'-monophosphates. This chain is 5'-nucleotidase SurE, found in Rhizobium meliloti (strain 1021) (Ensifer meliloti).